A 338-amino-acid chain; its full sequence is Nucleoid-associated protein CGSHiGG_07705 (338 aa).

The protein belongs to the YejK family.

Its subcellular location is the cytoplasm. It is found in the nucleoid. This Haemophilus influenzae (strain PittGG) protein is Nucleoid-associated protein CGSHiGG_07705.